Reading from the N-terminus, the 90-residue chain is Protein S100-A6 (90 aa).

2 consecutive EF-hand domains span residues 12–47 (LIGI…IGSK) and 48–83 (LQDA…LAMI). Positions 28 and 33 each coordinate Ca(2+). An N6-acetyllysine modification is found at K40. S46 carries the post-translational modification Phosphoserine. K47 carries the post-translational modification N6-acetyllysine; alternate. Position 47 is an N6-succinyllysine; alternate (K47). The Ca(2+) site is built by D61, N63, D65, E67, and E72.

This sequence belongs to the S-100 family. Homodimer; head to tail assembly of 2 subunits. Interacts with CACYBP in a calcium-dependent manner. Interacts with ANXA2 and ANXA11 (via N-terminus). Interacts with SUGT1. Interacts with TP53; has higher affinity for TP53 that is phosphorylated on its N-terminal domain, and lower affinity for TP53 that is phosphorylated on its C-terminal domain. Interacts with tropomyosin. Interacts with FKBP4. Interacts with PPP5C (via TPR repeats); the interaction is calcium-dependent and modulates PPP5C activity. Interacts with TPPP; this interaction inhibits TPPP dimerization.

The protein resides in the nucleus envelope. It is found in the cytoplasm. It localises to the cell membrane. May function as calcium sensor and modulator, contributing to cellular calcium signaling. May function by interacting with other proteins, such as TPR-containing proteins, and indirectly play a role in many physiological processes such as the reorganization of the actin cytoskeleton and in cell motility. Binds 2 calcium ions. Calcium binding is cooperative. The protein is Protein S100-A6 (S100A6) of Oryctolagus cuniculus (Rabbit).